Consider the following 468-residue polypeptide: Beta-monoglucosyldiacylglycerol synthase (468 aa).

4 helical membrane-spanning segments follow: residues 51–71, 72–92, 358–378, and 387–407; these read AALV…VSWG, SIFI…VVFA, MLMF…DLLM, and MLGP…FAGL.

Belongs to the glycosyltransferase 2 family. It depends on Mg(2+) as a cofactor.

Its subcellular location is the membrane. It catalyses the reaction a 1,2-diacyl-sn-glycerol + UDP-alpha-D-glucose = a 1,2-diacyl-3-O-(beta-D-glucopyranosyl)-sn-glycerol + UDP + H(+). Its function is as follows. Glucosyltransferase involved in the biosynthesis of the non-bilayer-forming membrane lipid beta-monoglucosyldiacylglycerol which contributes to regulate the properties and stability of the membrane. Catalyzes the transfer of a glucosyl residue from UDP-Glc to diacylglycerol (DAG) acceptor to form the corresponding beta-glucosyl-DAG (1,2-diacyl-3-O-(beta-D-glucopyranosyl)-sn-glycerol). It can only use UDP-Glc as sugar donor. Two types of DAG (dipalmitoyl-DAG (DPDAG) and 1-oleoyl-2-palmitoyl-DAG (OPDAG)) can be used as sugar acceptors, but OPDAG is preferred. This Nostoc sp. (strain PCC 7120 / SAG 25.82 / UTEX 2576) protein is Beta-monoglucosyldiacylglycerol synthase.